Consider the following 91-residue polypeptide: Small ribosomal subunit protein uS15 (91 aa).

This sequence belongs to the universal ribosomal protein uS15 family. As to quaternary structure, part of the 30S ribosomal subunit. Forms a bridge to the 50S subunit in the 70S ribosome, contacting the 23S rRNA.

In terms of biological role, one of the primary rRNA binding proteins, it binds directly to 16S rRNA where it helps nucleate assembly of the platform of the 30S subunit by binding and bridging several RNA helices of the 16S rRNA. Forms an intersubunit bridge (bridge B4) with the 23S rRNA of the 50S subunit in the ribosome. This chain is Small ribosomal subunit protein uS15, found in Rickettsia typhi (strain ATCC VR-144 / Wilmington).